The sequence spans 483 residues: Triacylglycerol lipase ptl3 (483 aa).

The 200-residue stretch at 141–340 folds into the PNPLA domain; that stretch reads LILSGGGTFG…DNDIPHAKLT (200 aa). Residues 145–150 carry the GXGXXG motif; the sequence is GGGTFG. Positions 172-176 match the GXSXG motif; sequence GSSAG. The Nucleophile role is filled by S174. The Proton acceptor role is filled by D327.

It localises to the cytoplasm. It is found in the lipid droplet. It catalyses the reaction a triacylglycerol + H2O = a diacylglycerol + a fatty acid + H(+). In terms of biological role, lipid particle-localized triacylglycerol (TAG) lipase. The lipid droplet/particle is a lipid storage compartment which serves as a depot of energy and building blocks for membrane lipid biosynthesis. Involved in the mobilization of the non-polar storage lipids triacylglycerols (TAGs) from lipid particles by hydrolysis of TAGs, releasing and supplying specific fatty acids to the appropriate metabolic pathways. In Schizosaccharomyces pombe (strain 972 / ATCC 24843) (Fission yeast), this protein is Triacylglycerol lipase ptl3 (ptl3).